A 193-amino-acid chain; its full sequence is Xanthine phosphoribosyltransferase (193 aa).

Residues Leu-20 and Thr-27 each contribute to the xanthine site. 5-phospho-alpha-D-ribose 1-diphosphate is bound at residue Ala-128 to Ala-132. Residue Lys-156 participates in xanthine binding.

The protein belongs to the purine/pyrimidine phosphoribosyltransferase family. Xpt subfamily. Homodimer.

The protein localises to the cytoplasm. The enzyme catalyses XMP + diphosphate = xanthine + 5-phospho-alpha-D-ribose 1-diphosphate. Its pathway is purine metabolism; XMP biosynthesis via salvage pathway; XMP from xanthine: step 1/1. Functionally, converts the preformed base xanthine, a product of nucleic acid breakdown, to xanthosine 5'-monophosphate (XMP), so it can be reused for RNA or DNA synthesis. The protein is Xanthine phosphoribosyltransferase of Streptococcus pneumoniae serotype 19F (strain G54).